Reading from the N-terminus, the 76-residue chain is uncharacterized protein (76 aa).

This is an uncharacterized protein from Treponema pallidum (strain Nichols).